A 362-amino-acid polypeptide reads, in one-letter code: UDP-N-acetylglucosamine--N-acetylmuramyl-(pentapeptide) pyrophosphoryl-undecaprenol N-acetylglucosamine transferase (362 aa).

UDP-N-acetyl-alpha-D-glucosamine-binding positions include 15-17 (TGG), Asn-127, Arg-165, Ser-191, Ile-247, 266-271 (ALTVSE), and Gln-292.

This sequence belongs to the glycosyltransferase 28 family. MurG subfamily.

Its subcellular location is the cell inner membrane. It catalyses the reaction di-trans,octa-cis-undecaprenyl diphospho-N-acetyl-alpha-D-muramoyl-L-alanyl-D-glutamyl-meso-2,6-diaminopimeloyl-D-alanyl-D-alanine + UDP-N-acetyl-alpha-D-glucosamine = di-trans,octa-cis-undecaprenyl diphospho-[N-acetyl-alpha-D-glucosaminyl-(1-&gt;4)]-N-acetyl-alpha-D-muramoyl-L-alanyl-D-glutamyl-meso-2,6-diaminopimeloyl-D-alanyl-D-alanine + UDP + H(+). It functions in the pathway cell wall biogenesis; peptidoglycan biosynthesis. Functionally, cell wall formation. Catalyzes the transfer of a GlcNAc subunit on undecaprenyl-pyrophosphoryl-MurNAc-pentapeptide (lipid intermediate I) to form undecaprenyl-pyrophosphoryl-MurNAc-(pentapeptide)GlcNAc (lipid intermediate II). This Shewanella putrefaciens (strain CN-32 / ATCC BAA-453) protein is UDP-N-acetylglucosamine--N-acetylmuramyl-(pentapeptide) pyrophosphoryl-undecaprenol N-acetylglucosamine transferase.